Consider the following 282-residue polypeptide: Biotin synthase (282 aa).

The Radical SAM core domain maps to 1-228 (MQEIFLCSIS…NARLMVAGGR (228 aa)). [4Fe-4S] cluster is bound by residues Cys-17, Cys-21, and Cys-24. [2Fe-2S] cluster is bound by residues Cys-61, Cys-96, Cys-154, and Arg-221.

Belongs to the radical SAM superfamily. Biotin synthase family. In terms of assembly, homodimer. [4Fe-4S] cluster serves as cofactor. [2Fe-2S] cluster is required as a cofactor.

It carries out the reaction (4R,5S)-dethiobiotin + (sulfur carrier)-SH + 2 reduced [2Fe-2S]-[ferredoxin] + 2 S-adenosyl-L-methionine = (sulfur carrier)-H + biotin + 2 5'-deoxyadenosine + 2 L-methionine + 2 oxidized [2Fe-2S]-[ferredoxin]. Its pathway is cofactor biosynthesis; biotin biosynthesis; biotin from 7,8-diaminononanoate: step 2/2. Catalyzes the conversion of dethiobiotin (DTB) to biotin by the insertion of a sulfur atom into dethiobiotin via a radical-based mechanism. The protein is Biotin synthase of Helicobacter pylori (strain J99 / ATCC 700824) (Campylobacter pylori J99).